The sequence spans 155 residues: Class I hydrophobin C (155 aa).

A signal peptide spans 1–22; sequence MLVTMRLSRSIAVFTLVTYATG. 4 cysteine pairs are disulfide-bonded: C52–C129, C60–C123, C61–C101, and C130–C148.

Belongs to the fungal hydrophobin family. As to quaternary structure, self-assembles to form functional amyloid fibrils called rodlets. Self-assembly into fibrillar rodlets occurs spontaneously at hydrophobic:hydrophilic interfaces and the rodlets further associate laterally to form amphipathic monolayers.

Its subcellular location is the secreted. It is found in the spore wall. In terms of biological role, aerial growth, conidiation, and dispersal of filamentous fungi in the environment rely upon a capability of their secreting small amphipathic proteins called hydrophobins (HPBs) with low sequence identity. Class I can self-assemble into an outermost layer of rodlet bundles on aerial cell surfaces, conferring cellular hydrophobicity that supports fungal growth, development and dispersal; whereas Class II form highly ordered films at water-air interfaces through intermolecular interactions but contribute nothing to the rodlet structure. RodC is a class I hydrophobin that, unlike rodA, is not required for rodlet formation. The sequence is that of Class I hydrophobin C from Aspergillus fumigatus (strain ATCC MYA-4609 / CBS 101355 / FGSC A1100 / Af293) (Neosartorya fumigata).